Here is a 128-residue protein sequence, read N- to C-terminus: MRHRKSGRQLNRNSSHRQAMFRNMAGSLVRHEIIKTTLPKAKELRRVVEPLITLAKTDSVANRRLAFARTRDNEIVAKLFNELGPRFASRAGGYTRILKCGFRAGDNAPMAYIELVDRSESKAEATAE.

This sequence belongs to the bacterial ribosomal protein bL17 family. Part of the 50S ribosomal subunit. Contacts protein L32.

This Enterobacter sp. (strain 638) protein is Large ribosomal subunit protein bL17.